We begin with the raw amino-acid sequence, 197 residues long: UPF0314 protein NGR_c32320 (197 aa).

3 helical membrane passes run 16–36 (WIWL…QHLM), 66–86 (WYTP…YLLL), and 152–172 (LPVA…GWII).

The protein belongs to the UPF0314 family.

It localises to the cell membrane. This chain is UPF0314 protein NGR_c32320, found in Sinorhizobium fredii (strain NBRC 101917 / NGR234).